Here is a 471-residue protein sequence, read N- to C-terminus: Nitrosourea synthase (471 aa).

Residues M177–K328 form an HO-like region. Residues E189, E215, H225, E281, H311, D315, H318, H407, H409, and H448 each coordinate Fe(2+). Residues V397 to Y459 form a cupin region.

In terms of assembly, homodimer. The cofactor is Fe(2+).

It catalyses the reaction N(omega)-methyl-L-arginine + 2 NADH + 3 O2 + H(+) = N(delta)-hydroxy-N(omega)-methyl-N(omega)-nitroso-L-citrulline + 2 NAD(+) + 3 H2O. It carries out the reaction N(omega)-methyl-L-arginine + NADH + O2 + H(+) = N(delta)-hydroxy-N(omega)-methyl-L-arginine + NAD(+) + H2O. The enzyme catalyses N(delta)-hydroxy-N(omega)-methyl-L-arginine + NADH + O2 = N(delta),N(omega')-dihydroxy-N(omega)-methyl-L-arginine + NAD(+) + H2O. The catalysed reaction is N(delta),N(omega')-dihydroxy-N(omega)-methyl-L-arginine + O2 = N(delta)-hydroxy-N(omega)-methyl-N(omega)-nitroso-L-citrulline + H2O. It catalyses the reaction 2 N(delta)-hydroxy-N(omega)-methyl-N(omega)-nitroso-L-citrulline + AH2 = 2 N(delta)-hydroxy-N(omega)-methyl-L-citrulline + 2 nitric oxide + A. The protein operates within antibiotic biosynthesis. Its function is as follows. Involved in the biosynthesis of the glucosamine-nitrosourea antibiotic streptozotocin (SZN). Catalyzes a complex multi-step reaction: the overall reaction is an oxidative rearrangement of the guanidine group of N(omega)-methyl-L-arginine (L-NMA), generating an N-nitrosourea product. SznF first hydroxylates L-NMA to form N(delta)-hydroxy-N(omega)-methyl-L-arginine (L-HMA), which is further hydroxylated to give N(delta)-hydroxy-N(omega)-hydroxy-N(omega)-methyl-L-arginine (L-DHMA). Subsequently, an oxidative rearrangement converts this intermediate to N(delta)-hydroxy-N(omega)-methyl-N(omega)-nitroso-L-citrulline. This product is unstable, and degrades non-enzymically into nitric oxide and the denitrosated product N(delta)-hydroxy-N(omega)-methyl-L-citrulline. This chain is Nitrosourea synthase, found in Streptomyces achromogenes subsp. streptozoticus.